A 114-amino-acid chain; its full sequence is Large ribosomal subunit protein uL18 (114 aa).

It belongs to the universal ribosomal protein uL18 family. Part of the 50S ribosomal subunit; part of the 5S rRNA/L5/L18/L25 subcomplex. Contacts the 5S and 23S rRNAs.

Its function is as follows. This is one of the proteins that bind and probably mediate the attachment of the 5S RNA into the large ribosomal subunit, where it forms part of the central protuberance. The polypeptide is Large ribosomal subunit protein uL18 (Porphyromonas gingivalis (strain ATCC BAA-308 / W83)).